Here is a 240-residue protein sequence, read N- to C-terminus: Spore coat polysaccharide biosynthesis protein SpsF (240 aa).

Belongs to the CMP-NeuNAc synthase family.

It functions in the pathway spore coat biogenesis; spore coat polysaccharide biosynthesis. The polypeptide is Spore coat polysaccharide biosynthesis protein SpsF (spsF) (Bacillus subtilis (strain 168)).